The sequence spans 245 residues: Probable ABC transporter permease protein HI_0355 (245 aa).

6 consecutive transmembrane segments (helical) span residues 9-29 (LLIV…GSFP), 61-81 (ICLG…LLSF), 92-112 (ILVI…VLWF), 115-135 (GMAS…TAAC), 170-190 (LPAF…GAVV), and 217-237 (FAAL…IDWL). The 185-residue stretch at 50-234 (LWQHTQVTLL…SISLCLYFSI (185 aa)) folds into the ABC transmembrane type-1 domain.

The protein belongs to the binding-protein-dependent transport system permease family. CysTW subfamily.

It localises to the cell inner membrane. Its function is as follows. Probably part of a binding-protein-dependent transport system. Probably responsible for the translocation of the substrate across the membrane. This Haemophilus influenzae (strain ATCC 51907 / DSM 11121 / KW20 / Rd) protein is Probable ABC transporter permease protein HI_0355.